The primary structure comprises 248 residues: Probable transcriptional regulatory protein BARBAKC583_0163 (248 aa).

Belongs to the TACO1 family.

The protein resides in the cytoplasm. The chain is Probable transcriptional regulatory protein BARBAKC583_0163 from Bartonella bacilliformis (strain ATCC 35685 / KC583 / Herrer 020/F12,63).